The chain runs to 934 residues: MSAHDLKLEEIVNAETLRRKLNELADTADESYTSLPMRKVVLQTLKDALASGRANAEDMLMKDGGGTLCAKRLCYLMDTLIDILFEFATTRTYPTRNPSKAENMALVAVGGYGRGGLAQGSDIDLLFLLPYKQTPWGEQVVEYTLYMLWDMGLKVGHSTRNIDECIRLAREDMTIRTALLDARFLTGDKDLFRTLEIRFEEEIVKGTEPEFIQAKLAERDARHRKAGETRYLVEPNVKEGKGGQRDLHTLFWITKYFYRVKTKEELVKLGVLSRAELKLFNKAEDFLWAVRCHMHFATLKAEERLSFDIQPEIAQRLGYTAHPGQNYVERFMKHYFLVAKDVGDLTRIICAALEEQQAKHVPGFNRIFLTFSRRKRKLSDDGAFISENHRINIARPDIFRQDPVNMIRLFHLADRHGLEFHPEAMQSLTRSLKLINADLRENPEANRLFLEILTSPRNPELILRRMNESGVLGKFIPDFGKIVAMMQFNMYHHYTVDEHLLRCIAVLSEIEHGELKTEHPLSNHLITTIKRDRNLLYVTLLLHDIAKGRPEDHSIAGARIARRLCPRFGLTPSETETVEWLVREHLTMSMVAQSRDLNDRKTIIDFADTVQTMERLKLLLILTVCDIKAVGPGIWNGWKGQLLRTLFYETELVLTGGFSELSRAARDKQAREALAERLSDWPKEERDAYLALPYTNYFLTVSLDDQVRHAHFIRDADQQGRALVTMAKPHAFEAVTEITVLAPDHPRLLSVITGACAAAGGNIVDAQIFTTSDGRALDTILISREFDTDDDERRRAERVGKVIEDVLSGKAHLPDMLAKRTKPKKAARAFKVEPRVEINNTLSNKFTVIEVEGLDRPGLLSELTGLISDLSLDIASAHITTFGEKVIDSFYVTDLVGHKISNATRQGNIKRKLLALLGAENGARTNGRSPQAAA.

A uridylyltransferase region spans residues 1 to 379 (MSAHDLKLEE…TFSRRKRKLS (379 aa)). The tract at residues 380 to 736 (DDGAFISENH…AKPHAFEAVT (357 aa)) is uridylyl-removing. Positions 496 to 613 (VDEHLLRCIA…IDFADTVQTM (118 aa)) constitute an HD domain. 2 ACT domains span residues 737–818 (EITV…DMLA) and 848–931 (VIEV…RSPQ).

It belongs to the GlnD family. It depends on Mg(2+) as a cofactor.

It catalyses the reaction [protein-PII]-L-tyrosine + UTP = [protein-PII]-uridylyl-L-tyrosine + diphosphate. The catalysed reaction is [protein-PII]-uridylyl-L-tyrosine + H2O = [protein-PII]-L-tyrosine + UMP + H(+). Uridylyltransferase (UTase) activity is inhibited by glutamine, while glutamine activates uridylyl-removing (UR) activity. Modifies, by uridylylation and deuridylylation, the PII regulatory proteins (GlnB and homologs), in response to the nitrogen status of the cell that GlnD senses through the glutamine level. Under low glutamine levels, catalyzes the conversion of the PII proteins and UTP to PII-UMP and PPi, while under higher glutamine levels, GlnD hydrolyzes PII-UMP to PII and UMP (deuridylylation). Thus, controls uridylylation state and activity of the PII proteins, and plays an important role in the regulation of nitrogen assimilation and metabolism. The protein is Bifunctional uridylyltransferase/uridylyl-removing enzyme of Brucella suis (strain ATCC 23445 / NCTC 10510).